Here is a 146-residue protein sequence, read N- to C-terminus: Large ribosomal subunit protein uL15 (146 aa).

The disordered stretch occupies residues 1 to 51 (MKLHELKPAKGSRKVRNRVGRGTSSGNGKTSGRGQKGQKARSGGGVRLGFE). Basic residues predominate over residues 10-19 (KGSRKVRNRV). Gly residues-rich tracts occupy residues 23–35 (TSSG…GRGQ) and 42–51 (SGGGVRLGFE).

It belongs to the universal ribosomal protein uL15 family. Part of the 50S ribosomal subunit.

Functionally, binds to the 23S rRNA. This chain is Large ribosomal subunit protein uL15, found in Streptococcus equi subsp. equi (strain 4047).